Here is a 252-residue protein sequence, read N- to C-terminus: Neurexophilin-3 (252 aa).

Residues 1 to 22 form the signal peptide; it reads MQLTRCCFVFLVQGSLYLVICG. The tract at residues 23–75 is II; it reads QDDGPPGSEDPERDDHEGQPRPRVPRKRGHISPKSRPMANSTLLGLLAPPGEA. The interval 27–58 is disordered; the sequence is PPGSEDPERDDHEGQPRPRVPRKRGHISPKSR. Over residues 45–55 the composition is skewed to basic residues; sequence RVPRKRGHISP. Residues asparagine 62, asparagine 127, asparagine 137, and asparagine 143 are each glycosylated (N-linked (GlcNAc...) asparagine). Residues 76–157 form an III region; that stretch reads WGILGQPPNR…LVPPSKAVEF (82 aa). The tract at residues 158-166 is IV (linker domain); it reads HQEQQIFIE. Positions 167 to 252 are v (Cys-rich); it reads AKASKIFNCR…HSDTPYYPSG (86 aa).

It belongs to the neurexophilin family. In terms of processing, may be proteolytically processed at the boundary between the N-terminal non-conserved and the central conserved domain in neuron-like cells. As to expression, highest level in brain.

Its subcellular location is the secreted. May be signaling molecules that resemble neuropeptides. Ligand for alpha-neurexins. In Homo sapiens (Human), this protein is Neurexophilin-3 (NXPH3).